A 567-amino-acid polypeptide reads, in one-letter code: Protein NRT1/ PTR FAMILY 4.5 (567 aa).

A run of 12 helical transmembrane segments spans residues 30 to 50, 70 to 92, 99 to 118, 147 to 167, 189 to 209, 219 to 239, 326 to 346, 374 to 394, 411 to 431, 448 to 468, 491 to 511, and 535 to 555; these read GMLA…AFLA, SSSE…GFLA, FVIF…LLTI, AFLF…KGSL, FFNY…TFVV, WGFG…LLGS, IVLK…CLAQ, VFPV…IIPF, IGVG…VELK, LPIT…ADLF, SLSW…VPIV, and LFYW…LFWA.

The protein belongs to the major facilitator superfamily. Proton-dependent oligopeptide transporter (POT/PTR) (TC 2.A.17) family. Expressed in flowers and siliques.

It is found in the membrane. Functionally, involved in abscisic acid transport. The protein is Protein NRT1/ PTR FAMILY 4.5 (NPF4.5) of Arabidopsis thaliana (Mouse-ear cress).